The chain runs to 96 residues: UPF0235 protein Pfl01_5322 (96 aa).

This sequence belongs to the UPF0235 family.

The sequence is that of UPF0235 protein Pfl01_5322 from Pseudomonas fluorescens (strain Pf0-1).